The chain runs to 64 residues: Large ribosomal subunit protein bL35 (64 aa).

Residues 1-55 (MPKMKSNKSVAARFKLTGSGQLKRTRPGKRHKLSKRSSQQKRNLSKQPLVDQGQV) are disordered. Over residues 23–39 (KRTRPGKRHKLSKRSSQ) the composition is skewed to basic residues.

It belongs to the bacterial ribosomal protein bL35 family.

This is Large ribosomal subunit protein bL35 from Chlamydia muridarum (strain MoPn / Nigg).